The sequence spans 201 residues: Adenylyl-sulfate kinase (201 aa).

35–42 (GLSGSGKS) lines the ATP pocket. Catalysis depends on serine 109, which acts as the Phosphoserine intermediate.

It belongs to the APS kinase family.

The catalysed reaction is adenosine 5'-phosphosulfate + ATP = 3'-phosphoadenylyl sulfate + ADP + H(+). The protein operates within sulfur metabolism; hydrogen sulfide biosynthesis; sulfite from sulfate: step 2/3. Its function is as follows. Catalyzes the synthesis of activated sulfate. This chain is Adenylyl-sulfate kinase, found in Shigella boydii serotype 18 (strain CDC 3083-94 / BS512).